Reading from the N-terminus, the 171-residue chain is 3-hydroxydecanoyl-[acyl-carrier-protein] dehydratase (171 aa).

H70 is an active-site residue.

This sequence belongs to the thioester dehydratase family. FabA subfamily. Homodimer.

The protein localises to the cytoplasm. The catalysed reaction is a (3R)-hydroxyacyl-[ACP] = a (2E)-enoyl-[ACP] + H2O. It carries out the reaction (3R)-hydroxydecanoyl-[ACP] = (2E)-decenoyl-[ACP] + H2O. It catalyses the reaction (2E)-decenoyl-[ACP] = (3Z)-decenoyl-[ACP]. It participates in lipid metabolism; fatty acid biosynthesis. Its function is as follows. Necessary for the introduction of cis unsaturation into fatty acids. Catalyzes the dehydration of (3R)-3-hydroxydecanoyl-ACP to E-(2)-decenoyl-ACP and then its isomerization to Z-(3)-decenoyl-ACP. Can catalyze the dehydratase reaction for beta-hydroxyacyl-ACPs with saturated chain lengths up to 16:0, being most active on intermediate chain length. This is 3-hydroxydecanoyl-[acyl-carrier-protein] dehydratase from Pseudoalteromonas translucida (strain TAC 125).